Here is a 688-residue protein sequence, read N- to C-terminus: Polyphosphate kinase (688 aa).

Residue Asn-45 participates in ATP binding. Mg(2+) is bound by residues Arg-375 and Arg-405. The PLD phosphodiesterase domain occupies 430-464 (PGLKIHAKLFLISRKENGEVVRYAHIGTGNFNEKT). The Phosphohistidine intermediate role is filled by His-435. ATP is bound by residues Tyr-468, Arg-564, and His-592.

Belongs to the polyphosphate kinase 1 (PPK1) family. It depends on Mg(2+) as a cofactor. In terms of processing, an intermediate of this reaction is the autophosphorylated ppk in which a phosphate is covalently linked to a histidine residue through a N-P bond.

The enzyme catalyses [phosphate](n) + ATP = [phosphate](n+1) + ADP. In terms of biological role, catalyzes the reversible transfer of the terminal phosphate of ATP to form a long-chain polyphosphate (polyP). The protein is Polyphosphate kinase of Escherichia coli O6:H1 (strain CFT073 / ATCC 700928 / UPEC).